The sequence spans 521 residues: 2-isopropylmalate synthase (521 aa).

Residues 5-267 (VIIFDTTLRD…HTNIKHQEIH (263 aa)) form the Pyruvate carboxyltransferase domain. Asp-14, His-202, His-204, and Asn-238 together coordinate Mn(2+). Positions 392 to 521 (KLNYLSVQSG…FAQKTVMETL (130 aa)) are regulatory domain.

This sequence belongs to the alpha-IPM synthase/homocitrate synthase family. LeuA type 1 subfamily. Homodimer. The cofactor is Mn(2+).

It is found in the cytoplasm. It carries out the reaction 3-methyl-2-oxobutanoate + acetyl-CoA + H2O = (2S)-2-isopropylmalate + CoA + H(+). It participates in amino-acid biosynthesis; L-leucine biosynthesis; L-leucine from 3-methyl-2-oxobutanoate: step 1/4. In terms of biological role, catalyzes the condensation of the acetyl group of acetyl-CoA with 3-methyl-2-oxobutanoate (2-ketoisovalerate) to form 3-carboxy-3-hydroxy-4-methylpentanoate (2-isopropylmalate). The polypeptide is 2-isopropylmalate synthase (Tolumonas auensis (strain DSM 9187 / NBRC 110442 / TA 4)).